Here is a 266-residue protein sequence, read N- to C-terminus: Undecaprenyl-diphosphatase (266 aa).

A run of 7 helical transmembrane segments spans residues 41 to 61 (NLAF…VILW), 82 to 102 (YVIN…FFKD), 106 to 126 (AIFG…AALL), 140 to 160 (ISMK…LPGL), 180 to 200 (LAQF…LLDG), 213 to 233 (IPTL…CLAC), and 245 to 265 (LIYF…VSQL).

This sequence belongs to the UppP family.

It is found in the cell inner membrane. It carries out the reaction di-trans,octa-cis-undecaprenyl diphosphate + H2O = di-trans,octa-cis-undecaprenyl phosphate + phosphate + H(+). Functionally, catalyzes the dephosphorylation of undecaprenyl diphosphate (UPP). Confers resistance to bacitracin. The chain is Undecaprenyl-diphosphatase from Bacteroides fragilis (strain ATCC 25285 / DSM 2151 / CCUG 4856 / JCM 11019 / LMG 10263 / NCTC 9343 / Onslow / VPI 2553 / EN-2).